Consider the following 286-residue polypeptide: Ribonuclease H1 (286 aa).

Over residues 101-115 (EPLDGDGHESAEPYA) the composition is skewed to basic and acidic residues. Residues 101-127 (EPLDGDGHESAEPYAKHMKPSVEPAPP) are disordered. The RNase H type-1 domain maps to 136–282 (MGDFVVVYTD…ADRLAREGAK (147 aa)). Positions 145, 186, 210, and 274 each coordinate Mg(2+).

This sequence belongs to the RNase H family. In terms of assembly, monomer. Mg(2+) serves as cofactor. In terms of tissue distribution, ubiquitous.

The protein resides in the cytoplasm. It catalyses the reaction Endonucleolytic cleavage to 5'-phosphomonoester.. With respect to regulation, in the presence of magnesium, manganese is inhibitory. Endonuclease that specifically degrades the RNA of RNA-DNA hybrids. Plays a role in RNA polymerase II (RNAp II) transcription termination by degrading R-loop RNA-DNA hybrid formation at G-rich pause sites located downstream of the poly(A) site and behind the elongating RNAp II. The chain is Ribonuclease H1 (RNASEH1) from Homo sapiens (Human).